Consider the following 364-residue polypeptide: Dihydroflavonol 4-reductase (364 aa).

Residues Lys45 and Tyr164 each contribute to the NADP(+) site.

Belongs to the NAD(P)-dependent epimerase/dehydratase family. Dihydroflavonol-4-reductase subfamily.

The catalysed reaction is a (2R,3S,4S)-leucoanthocyanidin + NADP(+) = a (2R,3R)-dihydroflavonol + NADPH + H(+). It catalyses the reaction (2S)-flavan-4-ol + NADP(+) = (2S)-flavanone + NADPH + H(+). It participates in pigment biosynthesis; anthocyanin biosynthesis. Bifunctional enzyme involved in flavonoid metabolism. The chain is Dihydroflavonol 4-reductase (F) from Callistephus chinensis (China aster).